A 323-amino-acid chain; its full sequence is Cyclin-H (323 aa).

Phosphoserine; by CDK8 is present on Ser-5. Ser-132 is modified (phosphoserine). The tract at residues 295–323 (KGYEDDDYVSKKPKQEEEEWTDDDLVDSL) is disordered. Ser-304 carries the post-translational modification Phosphoserine; by CDK8. Over residues 310–323 (EEEEWTDDDLVDSL) the composition is skewed to acidic residues. At Thr-315 the chain carries Phosphothreonine. Ser-322 carries the phosphoserine modification.

It belongs to the cyclin family. Cyclin C subfamily. Associates primarily with CDK7 and MAT1 to form the CAK complex. CAK can further associate with the core-TFIIH to form the TFIIH basal transcription factor. In terms of tissue distribution, expressed in both the germinal and somatic cells of the testis.

The protein resides in the nucleus. Functionally, regulates CDK7, the catalytic subunit of the CDK-activating kinase (CAK) enzymatic complex. CAK activates the cyclin-associated kinases CDK1, CDK2, CDK4 and CDK6 by threonine phosphorylation. CAK complexed to the core-TFIIH basal transcription factor activates RNA polymerase II by serine phosphorylation of the repetitive C-terminal domain (CTD) of its large subunit (POLR2A), allowing its escape from the promoter and elongation of the transcripts. Involved in cell cycle control and in RNA transcription by RNA polymerase II. Its expression and activity are constant throughout the cell cycle. This is Cyclin-H (Ccnh) from Mus musculus (Mouse).